A 122-amino-acid chain; its full sequence is Large ribosomal subunit protein bL12 (122 aa).

The disordered stretch occupies residues 96-122; that stretch reads APKSLKTGLSKDEANEMKKKLEDAGAT. Residues 104 to 122 are compositionally biased toward basic and acidic residues; sequence LSKDEANEMKKKLEDAGAT.

This sequence belongs to the bacterial ribosomal protein bL12 family. As to quaternary structure, homodimer. Part of the ribosomal stalk of the 50S ribosomal subunit. Forms a multimeric L10(L12)X complex, where L10 forms an elongated spine to which 2 to 4 L12 dimers bind in a sequential fashion. Binds GTP-bound translation factors.

Its function is as follows. Forms part of the ribosomal stalk which helps the ribosome interact with GTP-bound translation factors. Is thus essential for accurate translation. This is Large ribosomal subunit protein bL12 from Liberibacter asiaticus (Citrus greening disease).